The sequence spans 354 residues: Kelch domain-containing protein 8B (354 aa).

Kelch repeat units follow at residues 1 to 31 (MSAGGGRAFAWQVFPPMPTCRVYGTVAHQDE), 32 to 79 (HLLV…VLGK), 81 to 127 (VLVV…ERDG), 128 to 175 (MVYA…LHGN), 176 to 222 (KIYV…MAEG), 224 to 281 (VFSL…SLGG), 282 to 329 (HIVA…QAGP), and 331 to 354 (LFVIGGVAQGPSQAVEALCLRDGV).

Its subcellular location is the cytoplasm. It is found in the midbody. Involved in pinching off the separated nuclei at the cleavage furrow and in cytokinesis. Required for mitotic integrity and maintenance of chromosomal stability. Protects cells against mitotic errors, centrosomal amplification, micronucleus formation and aneuploidy. Plays a key role of midbody function involving abscission of the daughter cells during cytokinesis and appropriate chromosomal and nuclear segregation into the daughter cells. The protein is Kelch domain-containing protein 8B (KLHDC8B) of Pongo abelii (Sumatran orangutan).